A 21-amino-acid polypeptide reads, in one-letter code: Nigrocin-2GRb (21 aa).

As to expression, expressed by the skin glands.

The protein localises to the secreted. Functionally, antimicrobial peptide active against the Gram-positive bacterium S.aureus (MIC=12.5 uM) and against the Gram-negative bacteria E.coli (MIC=3 uM). Has antifungal activity against C.albicans (MIC=50 uM). Has some hemolytic activity against human erythrocytes (LC(50)=40 uM). The sequence is that of Nigrocin-2GRb from Odorrana grahami (Yunnanfu frog).